A 276-amino-acid chain; its full sequence is Small ribosomal subunit protein uS2 (276 aa).

A disordered region spans residues 251 to 276 (AEEAPAAAEEAPAAEPAAEETPAAEA). Residues 252–276 (EEAPAAAEEAPAAEPAAEETPAAEA) show a composition bias toward low complexity.

The protein belongs to the universal ribosomal protein uS2 family.

In Jannaschia sp. (strain CCS1), this protein is Small ribosomal subunit protein uS2.